Reading from the N-terminus, the 399-residue chain is Flavohemoprotein (399 aa).

The region spanning 1 to 138 (MLDNKTIEII…IADAFIGIEK (138 aa)) is the Globin domain. His-85 is a binding site for heme b. Catalysis depends on charge relay system residues Tyr-95 and Glu-137. The segment at 149 to 399 (GGWKEYKPFV…GPQLSLAQSV (251 aa)) is reductase. Residues 152-255 (KEYKPFVIAK…SAPAGDFVLD (104 aa)) form the FAD-binding FR-type domain. Residues Tyr-190 and 206-209 (RQYS) each bind FAD. 268-273 (GVGITP) provides a ligand contact to NADP(+). 388–391 (LFGP) contributes to the FAD binding site.

The protein belongs to the globin family. Two-domain flavohemoproteins subfamily. It in the C-terminal section; belongs to the flavoprotein pyridine nucleotide cytochrome reductase family. The cofactor is heme b. Requires FAD as cofactor.

It catalyses the reaction 2 nitric oxide + NADPH + 2 O2 = 2 nitrate + NADP(+) + H(+). The catalysed reaction is 2 nitric oxide + NADH + 2 O2 = 2 nitrate + NAD(+) + H(+). Its function is as follows. Is involved in NO detoxification in an aerobic process, termed nitric oxide dioxygenase (NOD) reaction that utilizes O(2) and NAD(P)H to convert NO to nitrate, which protects the bacterium from various noxious nitrogen compounds. Therefore, plays a central role in the inducible response to nitrosative stress. This Bacillus subtilis (strain 168) protein is Flavohemoprotein (hmp).